Consider the following 73-residue polypeptide: Methionyl-tRNA formyltransferase (73 aa).

It belongs to the Fmt family.

The catalysed reaction is L-methionyl-tRNA(fMet) + (6R)-10-formyltetrahydrofolate = N-formyl-L-methionyl-tRNA(fMet) + (6S)-5,6,7,8-tetrahydrofolate + H(+). Attaches a formyl group to the free amino group of methionyl-tRNA(fMet). The formyl group appears to play a dual role in the initiator identity of N-formylmethionyl-tRNA by promoting its recognition by IF2 and preventing the misappropriation of this tRNA by the elongation apparatus. The polypeptide is Methionyl-tRNA formyltransferase (fmt) (Rickettsia rickettsii).